We begin with the raw amino-acid sequence, 129 residues long: uncharacterized protein (129 aa).

The next 3 helical transmembrane spans lie at 15–35 (IFII…IFVF), 48–68 (IFSF…YYFF), and 107–127 (INIF…NLVC).

The protein resides in the membrane. This is an uncharacterized protein from Saccharomyces cerevisiae (strain ATCC 204508 / S288c) (Baker's yeast).